Consider the following 419-residue polypeptide: Hyaluronidase-3 (419 aa).

The N-terminal stretch at 1-16 is a signal peptide; that stretch reads MTMQLGLALVLGVAMC. Disulfide bonds link C42/C331, C205/C220, C356/C367, C361/C395, and C397/C406. Residue N69 is glycosylated (N-linked (GlcNAc...) asparagine). The active-site Proton donor is the E129. N-linked (GlcNAc...) asparagine glycosylation occurs at N215. The region spanning 352-407 is the EGF-like domain; sequence AAMACSHQRCHGHGRCAWQDPGQLKVFLHLHPGGSPGAWESFSCRCYWGWAGPTCQ.

It belongs to the glycosyl hydrolase 56 family. In terms of processing, N-glycosylated. As to expression, highly expressed in bladder, spleen and liver. Expressed at low levels in the kidney.

The protein localises to the secreted. It is found in the cell membrane. It localises to the cytoplasmic vesicle. Its subcellular location is the secretory vesicle. The protein resides in the acrosome. The protein localises to the endoplasmic reticulum. It is found in the early endosome. It carries out the reaction Random hydrolysis of (1-&gt;4)-linkages between N-acetyl-beta-D-glucosamine and D-glucuronate residues in hyaluronate.. Functionally, facilitates sperm penetration into the layer of cumulus cells surrounding the egg by digesting hyaluronic acid. Involved in induction of the acrosome reaction in the sperm. Involved in follicular atresia, the breakdown of immature ovarian follicles that are not selected to ovulate. Induces ovarian granulosa cell apoptosis, possibly via apoptotic signaling pathway involving CASP8 and CASP3 activation, and poly(ADP-ribose) polymerase (PARP) cleavage. Has no hyaluronidase activity in embryonic fibroblasts in vitro. Has no hyaluronidase activity in granulosa cells in vitro. The polypeptide is Hyaluronidase-3 (HYAL3) (Sus scrofa (Pig)).